A 60-amino-acid polypeptide reads, in one-letter code: Short neurotoxin 1 (60 aa).

4 disulfides stabilise this stretch: Cys3-Cys22, Cys17-Cys39, Cys41-Cys52, and Cys53-Cys58.

This sequence belongs to the three-finger toxin family. Short-chain subfamily. Type I alpha-neurotoxin sub-subfamily. As to expression, expressed by the venom gland.

The protein localises to the secreted. In terms of biological role, binds to muscle nicotinic acetylcholine receptor (nAChR) and inhibit acetylcholine from binding to the receptor, thereby impairing neuromuscular transmission. In Hydrophis schistosus (Beaked sea snake), this protein is Short neurotoxin 1.